Reading from the N-terminus, the 151-residue chain is Transcriptional regulator MraZ (151 aa).

SpoVT-AbrB domains are found at residues A5–E52 and A81–A124.

Belongs to the MraZ family. In terms of assembly, forms oligomers.

It localises to the cytoplasm. It is found in the nucleoid. The chain is Transcriptional regulator MraZ from Pseudomonas putida (strain ATCC 700007 / DSM 6899 / JCM 31910 / BCRC 17059 / LMG 24140 / F1).